The sequence spans 376 residues: RCC1 domain-containing protein 1 (376 aa).

An interaction with KDM8 region spans residues 1-169 (MAEERPGAWF…ARQLELGAEH (169 aa)). The RCC1 1 repeat unit spans residues 6 to 56 (PGAWFGFGFCGFGQELGSGRGRQVHSPSPLRAGVDICRVSASWSYTAFVTR). (3R)-3-hydroxyarginine is present on R141. 3 RCC1 repeats span residues 176 to 227 (AGQV…CVSE), 229 to 317 (GDIY…VVTR), and 318 to 371 (TGEL…VYAV).

Found in a complex with KDM8. Interacts (via N-terminus) with KDM8 (via N-terminus). In terms of processing, specifically hydroxylated (with R stereochemistry) at C-3 of ARG-141 by KDM8.

Its subcellular location is the chromosome. Its function is as follows. Plays a role in transcriptional repression of satellite repeats, possibly by regulating H3K36 methylation levels in centromeric regions together with KDM8. Possibly together with KDM8, is involved in proper mitotic spindle organization and chromosome segregation. Plays a role in regulating alpha-tubulin deacetylation and cytoskeletal microtubule stability, thereby promoting cell migration and TGF-beta-induced epithelial to mesenchymal transition (EMT), potentially through the inhibition of KDM8. The chain is RCC1 domain-containing protein 1 from Homo sapiens (Human).